A 368-amino-acid chain; its full sequence is 1-deoxy-D-xylulose 5-phosphate reductoisomerase (368 aa).

Residues Thr-7, Gly-8, Ser-9, Ile-10, Gly-31, Lys-32, Asn-33, and Asn-113 each coordinate NADPH. Residue Lys-114 participates in 1-deoxy-D-xylulose 5-phosphate binding. Residue Glu-115 coordinates NADPH. Asp-133 contacts Mn(2+). 1-deoxy-D-xylulose 5-phosphate-binding residues include Ser-134, Glu-135, Ser-158, and His-181. Residue Glu-135 participates in Mn(2+) binding. Gly-187 provides a ligand contact to NADPH. 1-deoxy-D-xylulose 5-phosphate is bound by residues Ser-194, Asn-199, Lys-200, and Glu-203. Glu-203 contacts Mn(2+).

The protein belongs to the DXR family. Mg(2+) is required as a cofactor. Mn(2+) serves as cofactor.

The enzyme catalyses 2-C-methyl-D-erythritol 4-phosphate + NADP(+) = 1-deoxy-D-xylulose 5-phosphate + NADPH + H(+). It functions in the pathway isoprenoid biosynthesis; isopentenyl diphosphate biosynthesis via DXP pathway; isopentenyl diphosphate from 1-deoxy-D-xylulose 5-phosphate: step 1/6. In terms of biological role, catalyzes the NADPH-dependent rearrangement and reduction of 1-deoxy-D-xylulose-5-phosphate (DXP) to 2-C-methyl-D-erythritol 4-phosphate (MEP). The chain is 1-deoxy-D-xylulose 5-phosphate reductoisomerase from Helicobacter pylori (strain Shi470).